A 484-amino-acid chain; its full sequence is Secreted RxLR effector protein 104 (484 aa).

The N-terminal stretch at 1–24 is a signal peptide; the sequence is MRSAYPVLTALLVVASSQIAAGSG. The RxLR-dEER signature appears at 48–65; the sequence is RFLRGSRDVHNNVANEER. A glycan (N-linked (GlcNAc...) asparagine) is linked at N175. Residues 324-463 are disordered; that stretch reads ENPKGQSPYP…SSSVLTPEDV (140 aa). Residues 327-346 show a composition bias toward polar residues; sequence KGQSPYPSTPLTAASTSKGG. Low complexity predominate over residues 402–413; sequence SSSSGPSRAFAP. Positions 418-428 are enriched in polar residues; sequence DQTFITENSRL.

Belongs to the RxLR effector family.

The protein resides in the secreted. It is found in the host nucleus. Secreted effector that completely suppresses the host cell death induced by cell death-inducing proteins. The sequence is that of Secreted RxLR effector protein 104 from Plasmopara viticola (Downy mildew of grapevine).